Consider the following 105-residue polypeptide: Platelet factor 4 (105 aa).

A signal peptide spans 1–29 (MSAAAVFRGLRPSPELLLLGLLLLPAVVA). The O-linked (GalNAc...) threonine; partial glycan is linked to Thr-31. Intrachain disulfides connect Cys-44-Cys-71 and Cys-46-Cys-87. Ser-61 is subject to Phosphoserine. 96–102 (KKIIKKL) lines the heparin pocket.

Belongs to the intercrine alpha (chemokine CxC) family. Homotetramer. Interacts with TNFAIP6 (via Link domain). Interacts with CCR1. Interacts with CXCR3. Interacts with THBD; this interaction enhances generation of activated protein C. Post-translationally, O-linked glycan consists of Gal-GalNAc disaccharide which is modified with sialic acid residues (microheterogeneity).

It is found in the secreted. Its function is as follows. Chemokine released during platelet aggregation that plays a role in different biological processes including hematopoiesis, cell proliferation, differentiation, and activation. Acts via different functional receptors including CCR1, CXCR3A or CXCR3B. Upon interaction with CXCR3A receptor, induces activated T-lymphocytes migration mediated via downstream Ras/extracellular signal-regulated kinase (ERK) signaling. Neutralizes the anticoagulant effect of heparin by binding more strongly to heparin than to the chondroitin-4-sulfate chains of the carrier molecule. Plays a role in the inhibition of hematopoiesis and in the maintenance of hematopoietic stem cell (HSC) quiescence. Chemotactic for neutrophils and monocytes via CCR1. Inhibits endothelial cell proliferation. In cooperation with toll-like receptor 8/TLR8, induces chromatin remodeling and activates inflammatory gene expression via the TBK1-IRF5 axis. In addition, induces myofibroblast differentiation and collagen synthesis in different precursor cells, including endothelial cells, by stimulating endothelial-to-mesenchymal transition. Interacts with thrombomodulin/THBD to enhance the activation of protein C and thus potentiates its anticoagulant activity. This Rattus norvegicus (Rat) protein is Platelet factor 4 (Pf4).